A 96-amino-acid chain; its full sequence is NADH-ubiquinone oxidoreductase chain 4L (96 aa).

3 helical membrane passes run Ile2–Val22, Leu28–Ile48, and Met62–Ile82.

It belongs to the complex I subunit 4L family.

The protein localises to the mitochondrion membrane. It carries out the reaction a ubiquinone + NADH + 5 H(+)(in) = a ubiquinol + NAD(+) + 4 H(+)(out). In terms of biological role, core subunit of the mitochondrial membrane respiratory chain NADH dehydrogenase (Complex I) that is believed to belong to the minimal assembly required for catalysis. Complex I functions in the transfer of electrons from NADH to the respiratory chain. The immediate electron acceptor for the enzyme is believed to be ubiquinone. The polypeptide is NADH-ubiquinone oxidoreductase chain 4L (mt:ND4L) (Drosophila nasuta F (Fruit fly)).